We begin with the raw amino-acid sequence, 124 residues long: S-adenosylmethionine decarboxylase proenzyme (124 aa).

Catalysis depends on Ser-63, which acts as the Schiff-base intermediate with substrate; via pyruvic acid. A Pyruvic acid (Ser); by autocatalysis modification is found at Ser-63. Catalysis depends on His-68, which acts as the Proton acceptor; for processing activity. Cys-83 (proton donor; for catalytic activity) is an active-site residue.

It belongs to the prokaryotic AdoMetDC family. Type 1 subfamily. Heterotetramer of two alpha and two beta chains arranged as a dimer of alpha/beta heterodimers. The cofactor is pyruvate. In terms of processing, is synthesized initially as an inactive proenzyme. Formation of the active enzyme involves a self-maturation process in which the active site pyruvoyl group is generated from an internal serine residue via an autocatalytic post-translational modification. Two non-identical subunits are generated from the proenzyme in this reaction, and the pyruvate is formed at the N-terminus of the alpha chain, which is derived from the carboxyl end of the proenzyme. The post-translation cleavage follows an unusual pathway, termed non-hydrolytic serinolysis, in which the side chain hydroxyl group of the serine supplies its oxygen atom to form the C-terminus of the beta chain, while the remainder of the serine residue undergoes an oxidative deamination to produce ammonia and the pyruvoyl group blocking the N-terminus of the alpha chain.

It catalyses the reaction S-adenosyl-L-methionine + H(+) = S-adenosyl 3-(methylsulfanyl)propylamine + CO2. It functions in the pathway amine and polyamine biosynthesis; S-adenosylmethioninamine biosynthesis; S-adenosylmethioninamine from S-adenosyl-L-methionine: step 1/1. Catalyzes the decarboxylation of S-adenosylmethionine to S-adenosylmethioninamine (dcAdoMet), the propylamine donor required for the synthesis of the polyamines spermine and spermidine from the diamine putrescine. In Acetivibrio thermocellus (strain ATCC 27405 / DSM 1237 / JCM 9322 / NBRC 103400 / NCIMB 10682 / NRRL B-4536 / VPI 7372) (Clostridium thermocellum), this protein is S-adenosylmethionine decarboxylase proenzyme.